The primary structure comprises 481 residues: Aspartyl/glutamyl-tRNA(Asn/Gln) amidotransferase subunit B (481 aa).

The protein belongs to the GatB/GatE family. GatB subfamily. In terms of assembly, heterotrimer of A, B and C subunits.

The catalysed reaction is L-glutamyl-tRNA(Gln) + L-glutamine + ATP + H2O = L-glutaminyl-tRNA(Gln) + L-glutamate + ADP + phosphate + H(+). It catalyses the reaction L-aspartyl-tRNA(Asn) + L-glutamine + ATP + H2O = L-asparaginyl-tRNA(Asn) + L-glutamate + ADP + phosphate + 2 H(+). In terms of biological role, allows the formation of correctly charged Asn-tRNA(Asn) or Gln-tRNA(Gln) through the transamidation of misacylated Asp-tRNA(Asn) or Glu-tRNA(Gln) in organisms which lack either or both of asparaginyl-tRNA or glutaminyl-tRNA synthetases. The reaction takes place in the presence of glutamine and ATP through an activated phospho-Asp-tRNA(Asn) or phospho-Glu-tRNA(Gln). The protein is Aspartyl/glutamyl-tRNA(Asn/Gln) amidotransferase subunit B of Teredinibacter turnerae (strain ATCC 39867 / T7901).